Here is a 76-residue protein sequence, read N- to C-terminus: Paralithocin 3 (76 aa).

The N-terminal stretch at 1–23 (MGPMKVLLVMLVVMVAAPHIADA) is a signal peptide. Intrachain disulfides connect C31/C62, C40/C58, C44/C56, and C49/C59. P74 carries the proline amide; partial modification.

Belongs to the paralithocin family. Post-translationally, the amidated form is probably the active form.

Functionally, has antibacterial activity, mainly against marine Gram-positive bacteria like C.maltaromaticum (MIC=25 uM), C.mobile (MIC=12.5 uM), C.divergens (MIC=25 uM) and C.funditum (MIC=12.5 uM) but also against C.glutamicum (MIC=12.5 uM). Has very little or no activity against Gram-negative bacteria. This Paralithodes camtschaticus (Red king crab) protein is Paralithocin 3.